A 402-amino-acid polypeptide reads, in one-letter code: Endo-polygalacturonase (402 aa).

The first 23 residues, 1 to 23 (MEYQSGKRVLSLSLGLIGLFSAS), serve as a signal peptide directing secretion. Disulfide bonds link cysteine 41/cysteine 62 and cysteine 115/cysteine 125. The active-site Proton donor is aspartate 249. The active site involves histidine 277.

The protein belongs to the glycosyl hydrolase 28 family. In terms of assembly, monomer.

The protein resides in the secreted. It catalyses the reaction (1,4-alpha-D-galacturonosyl)n+m + H2O = (1,4-alpha-D-galacturonosyl)n + (1,4-alpha-D-galacturonosyl)m.. Its function is as follows. Involved in maceration and soft-rotting of plant tissue. The protein is Endo-polygalacturonase (pehA) of Pectobacterium parmentieri.